A 71-amino-acid chain; its full sequence is Delta-actitoxin-Avd2b 4 (71 aa).

Positions 1–20 (MMNRLLVFLMLGAFMLVVSA) are cleaved as a signal peptide. Residues 21 to 41 (NDAYGDEPAFKDLNQGDESLG) constitute a propeptide that is removed on maturation. 3 cysteine pairs are disulfide-bonded: C46–C61, C47–C55, and C49–C66.

Belongs to the sea anemone short toxin (type III) family.

It localises to the secreted. The protein resides in the nematocyst. In terms of biological role, voltage-gated sodium channel (Nav) inhibitor. 1 uM completely inhibits insect voltage-gated sodium channel inactivation (DmNav1 from D.melanogaster). The protein is Delta-actitoxin-Avd2b 4 of Anemonia viridis (Snakelocks anemone).